Here is a 131-residue protein sequence, read N- to C-terminus: MTTKRKAYVRPMTSTWWKKLPFYRFYMLREGTAVPAVWFSIELIFGLFALKHGAESWMGFVGFLQNPVVVILNLIALAAALLHTKTWFELAPKAANIIVKDEKMGPEPIIKGLWVVTAVVTVVILYVALYW.

3 helical membrane passes run 30–50, 57–77, and 109–129; these read EGTA…LFAL, WMGF…LIAL, and IIKG…YVAL.

The protein belongs to the FrdC family. As to quaternary structure, part of an enzyme complex containing four subunits: a flavoprotein (FrdA), an iron-sulfur protein (FrdB), and two hydrophobic anchor proteins (FrdC and FrdD).

The protein resides in the cell inner membrane. Two distinct, membrane-bound, FAD-containing enzymes are responsible for the catalysis of fumarate and succinate interconversion; fumarate reductase is used in anaerobic growth, and succinate dehydrogenase is used in aerobic growth. Anchors the catalytic components of the fumarate reductase complex to the cell inner membrane, binds quinones. The protein is Fumarate reductase subunit C of Citrobacter koseri (strain ATCC BAA-895 / CDC 4225-83 / SGSC4696).